Reading from the N-terminus, the 535-residue chain is CTP synthase (535 aa).

The tract at residues 1 to 267 is amidoligase domain; the sequence is MTKYIFVTGG…DSLVCSHLKL (267 aa). Serine 13 lines the CTP pocket. A UTP-binding site is contributed by serine 13. 14 to 19 lines the ATP pocket; it reads SLGKGI. Tyrosine 54 serves as a coordination point for L-glutamine. Aspartate 71 is a binding site for ATP. Mg(2+)-binding residues include aspartate 71 and glutamate 141. Residues 148-150, 188-193, and lysine 224 contribute to the CTP site; these read DIE and KTKPTQ. Residues 188–193 and lysine 224 each bind UTP; that span reads KTKPTQ. A Glutamine amidotransferase type-1 domain is found at 292 to 534; sequence TIALVGKYVE…VHASLKTSEK (243 aa). Glycine 354 lines the L-glutamine pocket. Residue cysteine 381 is the Nucleophile; for glutamine hydrolysis of the active site. L-glutamine is bound by residues 382-385, glutamate 405, and arginine 462; that span reads LGMQ. Active-site residues include histidine 507 and glutamate 509.

The protein belongs to the CTP synthase family. In terms of assembly, homotetramer.

It carries out the reaction UTP + L-glutamine + ATP + H2O = CTP + L-glutamate + ADP + phosphate + 2 H(+). The catalysed reaction is L-glutamine + H2O = L-glutamate + NH4(+). It catalyses the reaction UTP + NH4(+) + ATP = CTP + ADP + phosphate + 2 H(+). It participates in pyrimidine metabolism; CTP biosynthesis via de novo pathway; CTP from UDP: step 2/2. Allosterically activated by GTP, when glutamine is the substrate; GTP has no effect on the reaction when ammonia is the substrate. The allosteric effector GTP functions by stabilizing the protein conformation that binds the tetrahedral intermediate(s) formed during glutamine hydrolysis. Inhibited by the product CTP, via allosteric rather than competitive inhibition. Catalyzes the ATP-dependent amination of UTP to CTP with either L-glutamine or ammonia as the source of nitrogen. Regulates intracellular CTP levels through interactions with the four ribonucleotide triphosphates. In Bacillus licheniformis (strain ATCC 14580 / DSM 13 / JCM 2505 / CCUG 7422 / NBRC 12200 / NCIMB 9375 / NCTC 10341 / NRRL NRS-1264 / Gibson 46), this protein is CTP synthase.